We begin with the raw amino-acid sequence, 366 residues long: Isopentenyl-diphosphate delta-isomerase (366 aa).

R6–K7 lines the substrate pocket. Residues T63, G64–T66, S94, and N123 contribute to the FMN site. Position 94-96 (S94–R96) interacts with substrate. Position 158 (Q158) interacts with substrate. E159 contacts Mg(2+). Residues K191, S216, T221, G273–R275, and A294–N295 contribute to the FMN site.

This sequence belongs to the IPP isomerase type 2 family. Homooctamer. Dimer of tetramers. FMN serves as cofactor. It depends on NADPH as a cofactor. Requires Mg(2+) as cofactor.

The protein resides in the cytoplasm. It carries out the reaction isopentenyl diphosphate = dimethylallyl diphosphate. In terms of biological role, involved in the biosynthesis of isoprenoids. Catalyzes the 1,3-allylic rearrangement of the homoallylic substrate isopentenyl (IPP) to its allylic isomer, dimethylallyl diphosphate (DMAPP). The sequence is that of Isopentenyl-diphosphate delta-isomerase from Metallosphaera sedula (strain ATCC 51363 / DSM 5348 / JCM 9185 / NBRC 15509 / TH2).